A 725-amino-acid polypeptide reads, in one-letter code: MADVYELFLTCPKGLESLLLEEAQGLGLDEARAQVSAVRGQGSLEVAYRLCLWSRLANRVLLVLARFPVENAESMYMAVHAVNWEDHLDAGGTLAVEFSGKGSGIDNTHFGALKVKDAIVDNLRERSGRRPSVDKVNPDVRVHLHLDRGQATLSLDLSGHSLHQRGYRLQQGAAPLKENLAAAVLIRAGWPKIAAEGGALADPMCGVGTFLVEAALMAADIAPNLKRERWGFSSWLGHVPALWRKLHEEAQQRAAAGLARPPLWIRGYEADPRLIQPACNNIERAGVADWVKIYQGELATFEPRPDKGQTGLVICNPPYGERLGDEASLLYLYQNLGERLRQSCIGWSAGVFTGAPELGKRMGIRSHKQYAFWNGALACKLLMIQVEPRQFVTGERGERNDEGLARAPSEPARLSEGGQMFANRLQKNLRQLGKWARRDKIECYRLYDADMPEYALAVDIYGDWVHVQEYAAPKSIDPAKAQARLFDALAAIPQTLGVAQERVVVKRRERQAGKKQYERQSSEGKFLEVGEGDVRLLVNLTDYLDTGLFLDHRPMRLRIQKEAAGKRFLNLFCYTATATVHAARGGARSTTSVDLSKTYLDWARRNLSLNGFSDKQRLVHGDVMEWLREDDGQYELIFIDPPTFSNSKRMEGVFDVQRDHVELLDLAMARLAPGGVLYFSNNFRKFELDESVQARYAVEEITGETLDPDFARNPKIHRAWRITVR.

The region spanning 46–157 is the THUMP domain; sequence VAYRLCLWSR…RGQATLSLDL (112 aa).

This sequence belongs to the methyltransferase superfamily. RlmKL family.

The protein localises to the cytoplasm. It catalyses the reaction guanosine(2445) in 23S rRNA + S-adenosyl-L-methionine = N(2)-methylguanosine(2445) in 23S rRNA + S-adenosyl-L-homocysteine + H(+). The catalysed reaction is guanosine(2069) in 23S rRNA + S-adenosyl-L-methionine = N(2)-methylguanosine(2069) in 23S rRNA + S-adenosyl-L-homocysteine + H(+). Its function is as follows. Specifically methylates the guanine in position 2445 (m2G2445) and the guanine in position 2069 (m7G2069) of 23S rRNA. The polypeptide is Ribosomal RNA large subunit methyltransferase K/L (Pseudomonas aeruginosa (strain ATCC 15692 / DSM 22644 / CIP 104116 / JCM 14847 / LMG 12228 / 1C / PRS 101 / PAO1)).